We begin with the raw amino-acid sequence, 415 residues long: Metal tolerance protein 5 (415 aa).

At 1-124 the chain is on the cytoplasmic side; it reads MAAAVAGGGE…REKVARSETL (124 aa). The chain crosses the membrane as a helical span at residues 125 to 145; it reads AIRLSNIANMVLFAAKVYASV. The Vacuolar portion of the chain corresponds to 146–150; that stretch reads RSGSL. A helical membrane pass occupies residues 151 to 171; it reads AIIASTLDSLLDLLSGFILWF. At 172–192 the chain is on the cytoplasmic side; that stretch reads TAFSMQTPNPYRYPIGKKRMQ. The chain crosses the membrane as a helical span at residues 193-213; it reads PLGILVFASVMATLGLQIILE. The Vacuolar segment spans residues 214–232; sequence SVRSLLSDGDEFSLTKEQE. The chain crosses the membrane as a helical span at residues 233–253; sequence KWVVDIMLAVTLVKLALVLYC. The Cytoplasmic segment spans residues 254 to 268; that stretch reads RTFTNEIVKAYAQDH. Residues 269-291 traverse the membrane as a helical segment; that stretch reads FFDVITNMIGLVAALLATYIEGW. Residues 292–293 lie on the Vacuolar side of the membrane; the sequence is ID. A helical membrane pass occupies residues 294-313; that stretch reads PVGAIILAIYTIRTWSMTVL. Topologically, residues 314 to 415 are cytoplasmic; the sequence is ENVHSLVGQS…RPEHALSHEK (102 aa).

Belongs to the cation diffusion facilitator (CDF) transporter (TC 2.A.4) family. SLC30A subfamily.

It localises to the vacuole membrane. In terms of biological role, involved in sequestration of excess metal in the cytoplasm into vacuoles to maintain metal homeostasis. The protein is Metal tolerance protein 5 (MTP5) of Oryza sativa subsp. japonica (Rice).